Reading from the N-terminus, the 92-residue chain is Conotoxin Ac8.1 (92 aa).

Residues 1 to 19 form the signal peptide; it reads LKMGAMFVLLLLFTLASSQ. The propeptide occupies 20-44; the sequence is QEGDVQARKTSLKSDFYRALRQYDR. A Pyrrolidone carboxylic acid modification is found at Gln45.

It belongs to the conotoxin S superfamily. Post-translationally, contains 5 disulfide bonds. Expressed by the venom duct.

The protein resides in the secreted. This chain is Conotoxin Ac8.1, found in Conus achatinus (Little frog cone).